The chain runs to 151 residues: Transcriptional repressor NrdR (151 aa).

A zinc finger spans residues 3 to 34; that stretch reads CPFCNSVDTSVKNSRPSDCKMSVRRRRSCDSC. Residues 49 to 139 form the ATP-cone domain; that stretch reads VKVLKKDGSV…VYMNFSDVND (91 aa).

The protein belongs to the NrdR family. Zn(2+) is required as a cofactor.

In terms of biological role, negatively regulates transcription of bacterial ribonucleotide reductase nrd genes and operons by binding to NrdR-boxes. The protein is Transcriptional repressor NrdR of Anaplasma marginale (strain Florida).